Consider the following 273-residue polypeptide: Dormancy associated translation inhibitor (273 aa).

Interacts with human TLR2.

Its function is as follows. Involved in translation regulation. Can also stimulate macrophages and peripheral blood mononuclear cells (PBMC) to secrete important cytokines that may be significant in granuloma formation and its maintenance. Increases secretion of IFN-gamma, TNF-alpha, IL-1 beta and IL-8 through human Toll-like receptor 2 (TLR2) signaling pathway. The polypeptide is Dormancy associated translation inhibitor (Mycobacterium tuberculosis (strain CDC 1551 / Oshkosh)).